The following is a 271-amino-acid chain: Tryptophan synthase alpha chain (271 aa).

Catalysis depends on proton acceptor residues Glu49 and Asp60.

This sequence belongs to the TrpA family. Tetramer of two alpha and two beta chains.

The catalysed reaction is (1S,2R)-1-C-(indol-3-yl)glycerol 3-phosphate + L-serine = D-glyceraldehyde 3-phosphate + L-tryptophan + H2O. It participates in amino-acid biosynthesis; L-tryptophan biosynthesis; L-tryptophan from chorismate: step 5/5. Functionally, the alpha subunit is responsible for the aldol cleavage of indoleglycerol phosphate to indole and glyceraldehyde 3-phosphate. In Rhizorhabdus wittichii (strain DSM 6014 / CCUG 31198 / JCM 15750 / NBRC 105917 / EY 4224 / RW1) (Sphingomonas wittichii), this protein is Tryptophan synthase alpha chain.